Consider the following 223-residue polypeptide: Deoxyribose-phosphate aldolase (223 aa).

Asp89 serves as the catalytic Proton donor/acceptor. The Schiff-base intermediate with acetaldehyde role is filled by Lys152. Residue Lys181 is the Proton donor/acceptor of the active site.

The protein belongs to the DeoC/FbaB aldolase family. DeoC type 1 subfamily.

It localises to the cytoplasm. It carries out the reaction 2-deoxy-D-ribose 5-phosphate = D-glyceraldehyde 3-phosphate + acetaldehyde. Its pathway is carbohydrate degradation; 2-deoxy-D-ribose 1-phosphate degradation; D-glyceraldehyde 3-phosphate and acetaldehyde from 2-deoxy-alpha-D-ribose 1-phosphate: step 2/2. In terms of biological role, catalyzes a reversible aldol reaction between acetaldehyde and D-glyceraldehyde 3-phosphate to generate 2-deoxy-D-ribose 5-phosphate. This Listeria monocytogenes serotype 4b (strain F2365) protein is Deoxyribose-phosphate aldolase.